The sequence spans 270 residues: DNA packaging protein OPG160 (270 aa).

25-32 serves as a coordination point for ATP; it reads GGSGSGKT.

It belongs to the orthopoxvirus OPG160 protein family. Interacts with protein OPG137.

In terms of biological role, participates in viral DNA packaging and virion morphogenesis. The polypeptide is DNA packaging protein OPG160 (OPG160) (Variola virus (isolate Human/India/Ind3/1967) (VARV)).